Consider the following 638-residue polypeptide: NBPF family member NBPF6 (638 aa).

Coiled-coil stretches lie at residues 10 to 43 (SERA…EKFL) and 69 to 115 (DSVL…KLRE). The tract at residues 157 to 285 (HLVHKLSPEN…VPPRHHDKSN (129 aa)) is disordered. Positions 165-179 (ENDEDEDEDEDDKDE) are enriched in acidic residues. In terms of domain architecture, Olduvai 1 spans 174-261 (EDDKDEEVEK…EEEEALNIPP (88 aa)). A compositionally biased stretch (basic and acidic residues) spans 192-202 (EVQKTEEKEVP). The segment covering 214 to 226 (SNSHNPSNSNQPH) has biased composition (low complexity). Basic and acidic residues-rich tracts occupy residues 232 to 251 (TFKE…HPHD) and 264 to 273 (QNDHEEEEGK). 2 Olduvai domains span residues 326 to 399 (EKQS…ALVD) and 400 to 503 (KIKK…SQAQ). The segment at 563 to 584 (MKNPPQLEDDALEGSASNTQGR) is disordered.

It belongs to the NBPF family.

The protein localises to the cytoplasm. The polypeptide is NBPF family member NBPF6 (Homo sapiens (Human)).